We begin with the raw amino-acid sequence, 1118 residues long: cGMP-specific 3',5'-cyclic phosphodiesterase (1118 aa).

Residues 1–142 (MTDVSSPAGG…KASTTASQQD (142 aa)) form a disordered region. Low complexity predominate over residues 18–33 (STTSSSSAATTSASSS). Residues 34–45 (KPLTNGANKTAI) show a composition bias toward polar residues. Low complexity-rich tracts occupy residues 46–56 (STAAGGVTPGA) and 63–72 (GAIPASSSSG). Positions 84–101 (SNNNRPAVTNRSSETKLM) are enriched in polar residues. The span at 102 to 128 (TPTGSSSSPSQSPSQTQASIQTQTSQQ) shows a compositional bias: low complexity. 2 GAF domains span residues 247 to 399 (DIDV…GIGI) and 431 to 612 (NLEC…GLGI). In terms of domain architecture, PDEase spans 642–965 (SQDQTEKLTQ…RNWQDLAEKV (324 aa)). Residue histidine 718 is the Proton donor of the active site. Residues histidine 722, histidine 758, aspartate 759, and aspartate 869 each contribute to the a divalent metal cation site. Disordered stretches follow at residues 1006–1035 (QQSQ…TGAL) and 1065–1118 (SHVS…CALL). Basic and acidic residues-rich tracts occupy residues 1011 to 1022 (GSEDSHTPEHQR) and 1065 to 1075 (SHVSEDMDDKS). Low complexity predominate over residues 1084–1104 (ASGSMGRMSASSSTSSAGGQM). The segment covering 1108–1118 (SKKRSKLCALL) has biased composition (basic residues). Cysteine 1115 bears the Cysteine methyl ester mark. Cysteine 1115 is lipidated: S-farnesyl cysteine. Positions 1116–1118 (ALL) are cleaved as a propeptide — removed in mature form.

Belongs to the cyclic nucleotide phosphodiesterase family. In terms of assembly, interacts with PrBP. A divalent metal cation is required as a cofactor. In terms of tissue distribution, expressed in Malpighian tubule principal cells. Also expressed in adult head.

It localises to the cell membrane. The catalysed reaction is 3',5'-cyclic GMP + H2O = GMP + H(+). Inhibited by sildenafil and zaprinast. Its function is as follows. Hydrolyzes the second messenger cGMP, which is a key regulator of many important physiological processes. Has cAMP phosphodiesterase activity in vitro but not in vivo. Has a role regulating cGMP transport in Malpighian tubule principal cells. In Drosophila melanogaster (Fruit fly), this protein is cGMP-specific 3',5'-cyclic phosphodiesterase (Pde6).